A 106-amino-acid chain; its full sequence is PAT complex subunit Asterix (106 aa).

The disordered stretch occupies residues 1–29; sequence MSTNNMSDPRRPNKVLRYKPPPSECNPAL. N-acetylserine is present on Ser-2. Over 2–32 the chain is Cytoplasmic; it reads STNNMSDPRRPNKVLRYKPPPSECNPALDDP. A helical membrane pass occupies residues 33–51; that stretch reads TPDYMNLLGMIFSMCGLML. Lys-52 is a topological domain (lumenal). Residues 53–70 traverse the membrane as a helical segment; sequence LKWCAWVAVYCSFISFAN. Topologically, residues 71–74 are cytoplasmic; it reads SRSS. Residues 75-95 form a helical membrane-spanning segment; sequence EDTKQMMSSFMLSISAVVMSY. The Lumenal segment spans residues 96-106; it reads LQNPQPMTPPW.

The protein belongs to the Asterix family. As to quaternary structure, component of the PAT complex, composed of WDR83OS/Asterix and CCDC47. The PAT complex is part of the multi-pass translocon (MPT) complex, composed of three subcomplexes, the GEL complex (composed of RAB5IF/OPTI and TMCO1), the BOS complex (composed of NCLN/Nicalin, NOMO1 and TMEM147) and the PAT complex (composed of WDR83OS/Asterix and CCDC47). The MPT complex associates with the SEC61 complex.

The protein localises to the endoplasmic reticulum membrane. In terms of biological role, component of the multi-pass translocon (MPT) complex that mediates insertion of multi-pass membrane proteins into the lipid bilayer of membranes. The MPT complex takes over after the SEC61 complex: following membrane insertion of the first few transmembrane segments of proteins by the SEC61 complex, the MPT complex occludes the lateral gate of the SEC61 complex to promote insertion of subsequent transmembrane regions. Within the MPT complex, the PAT subcomplex sequesters any highly polar regions in the transmembrane domains away from the non-polar membrane environment until they can be buried in the interior of the fully assembled protein. Within the PAT subcomplex, WDR83OS/Asterix binds to and redirects the substrate to a location behind the SEC61 complex. This chain is PAT complex subunit Asterix (WDR83OS), found in Canis lupus familiaris (Dog).